A 345-amino-acid polypeptide reads, in one-letter code: Methionine import ATP-binding protein MetN 2 (345 aa).

The region spanning 4–243 (IELRHVKKEF…PQTEIAKRFI (240 aa)) is the ABC transporter domain. 40–47 (GYSGAGKS) provides a ligand contact to ATP.

Belongs to the ABC transporter superfamily. Methionine importer (TC 3.A.1.24) family. In terms of assembly, the complex is composed of two ATP-binding proteins (MetN), two transmembrane proteins (MetI) and a solute-binding protein (MetQ).

The protein localises to the cell membrane. The catalysed reaction is L-methionine(out) + ATP + H2O = L-methionine(in) + ADP + phosphate + H(+). It carries out the reaction D-methionine(out) + ATP + H2O = D-methionine(in) + ADP + phosphate + H(+). Its function is as follows. Part of the ABC transporter complex MetNIQ involved in methionine import. Responsible for energy coupling to the transport system. The sequence is that of Methionine import ATP-binding protein MetN 2 from Enterococcus faecalis (strain ATCC 700802 / V583).